We begin with the raw amino-acid sequence, 494 residues long: Ubiquitin carboxyl-terminal hydrolase 14 (494 aa).

In terms of domain architecture, Ubiquitin-like spans 4 to 80 (YSVTVKWGKE…MMGSADALPE (77 aa)). Thr52 is modified (phosphothreonine). The USP domain maps to 105–483 (CGLTNLGNTC…IAYVLLYGPR (379 aa)). Cys114 serves as the catalytic Nucleophile. Ser143 and Ser148 each carry phosphoserine. Thr235 carries the phosphothreonine modification. 3 positions are modified to phosphoserine: Ser237, Ser302, and Ser432. His435 acts as the Proton acceptor in catalysis. Lys449 carries the N6-acetyllysine modification.

It belongs to the peptidase C19 family. USP14/UBP6 subfamily. Homodimer (Potential). Associates with the 26S proteasome. Interacts with FANCC, CXCR4 and ERN1. Interacts with TRIM14; this interaction recruits USP14 to cleave ubiquitin chains of CGAS and KDM4D.

The protein resides in the cytoplasm. Its subcellular location is the cell membrane. The catalysed reaction is Thiol-dependent hydrolysis of ester, thioester, amide, peptide and isopeptide bonds formed by the C-terminal Gly of ubiquitin (a 76-residue protein attached to proteins as an intracellular targeting signal).. Proteasome-associated deubiquitinase which releases ubiquitin from the proteasome targeted ubiquitinated proteins. Ensures the regeneration of ubiquitin at the proteasome. Is a reversibly associated subunit of the proteasome and a large fraction of proteasome-free protein exists within the cell. Required for the degradation of the chemokine receptor CXCR4 which is critical for CXCL12-induced cell chemotaxis. Also serves as a physiological inhibitor of endoplasmic reticulum-associated degradation (ERAD) under the non-stressed condition by inhibiting the degradation of unfolded endoplasmic reticulum proteins via interaction with ERN1. Indispensable for synaptic development and function at neuromuscular junctions (NMJs). Plays a role in the innate immune defense against viruses by stabilizing the viral DNA sensor CGAS and thus inhibiting its autophagic degradation. Inhibits OPTN-mediated selective autophagic degradation of KDM4D and thereby negatively regulates H3K9me2 and H3K9me3. The chain is Ubiquitin carboxyl-terminal hydrolase 14 (USP14) from Homo sapiens (Human).